The primary structure comprises 417 residues: Peptidyl-Asp metalloendopeptidase (417 aa).

An N-terminal signal peptide occupies residues 1-25 (MLSRSIGKAAGGLVLGLSVAAAAHA). Histidine 327 is a Zn(2+) binding site. Glutamate 328 is a catalytic residue. Zn(2+)-binding residues include histidine 331 and histidine 337.

It belongs to the peptidase M72 family. The cofactor is Zn(2+).

It carries out the reaction Cleavage of Xaa-|-Asp, Xaa-|-Glu and Xaa-|-cysteic acid bonds.. Metalloprotease, specifically cleaves on the N-terminal side of aspartyl, glutamyl and cysteic acid residues. The polypeptide is Peptidyl-Asp metalloendopeptidase (Stenotrophomonas maltophilia (strain K279a)).